Consider the following 478-residue polypeptide: Glycogen synthase (478 aa).

K15 is an ADP-alpha-D-glucose binding site.

It belongs to the glycosyltransferase 1 family. Bacterial/plant glycogen synthase subfamily.

It carries out the reaction [(1-&gt;4)-alpha-D-glucosyl](n) + ADP-alpha-D-glucose = [(1-&gt;4)-alpha-D-glucosyl](n+1) + ADP + H(+). It participates in glycan biosynthesis; glycogen biosynthesis. Functionally, synthesizes alpha-1,4-glucan chains using ADP-glucose. This is Glycogen synthase from Clostridium botulinum (strain Eklund 17B / Type B).